The primary structure comprises 108 residues: MKYLAAYLLLVNAGNATPSAADVKAVLSAADIEVEEEKVEKLISESDGKNVEELIAEGNEKLSSVPSGAPAAAAGGASAAAGGEATEEAAEEEAAEESDDDMSFGLFD.

The disordered stretch occupies residues 62-108; sequence LSSVPSGAPAAAAGGASAAAGGEATEEAAEEEAAEESDDDMSFGLFD. The segment covering 68–84 has biased composition (low complexity); that stretch reads GAPAAAAGGASAAAGGE. The span at 85-102 shows a compositional bias: acidic residues; sequence ATEEAAEEEAAEESDDDM. At serine 98 the chain carries Phosphoserine.

The protein belongs to the eukaryotic ribosomal protein P1/P2 family.

In terms of biological role, plays an important role in the elongation step of protein synthesis. The chain is Large ribosomal subunit protein P2A (RPP2A) from Candida albicans (Yeast).